We begin with the raw amino-acid sequence, 1211 residues long: DNA-directed RNA polymerase subunit beta' (1211 aa).

Zn(2+)-binding residues include Cys-60, Cys-62, Cys-75, and Cys-78. Mg(2+) contacts are provided by Asp-450, Asp-452, and Asp-454. Zn(2+) is bound by residues Cys-819, Cys-893, Cys-900, and Cys-903.

Belongs to the RNA polymerase beta' chain family. As to quaternary structure, the RNAP catalytic core consists of 2 alpha, 1 beta, 1 beta' and 1 omega subunit. When a sigma factor is associated with the core the holoenzyme is formed, which can initiate transcription. Mg(2+) is required as a cofactor. It depends on Zn(2+) as a cofactor.

It carries out the reaction RNA(n) + a ribonucleoside 5'-triphosphate = RNA(n+1) + diphosphate. DNA-dependent RNA polymerase catalyzes the transcription of DNA into RNA using the four ribonucleoside triphosphates as substrates. This chain is DNA-directed RNA polymerase subunit beta', found in Streptococcus equi subsp. zooepidemicus (strain H70).